The following is a 218-amino-acid chain: NAD(P)H-hydrate epimerase (218 aa).

The region spanning 9-215 is the YjeF N-terminal domain; it reads MKKIDQYAID…DIGIPQKAIR (207 aa). Residue 55 to 59 coordinates (6S)-NADPHX; it reads NNGAD. Residues Asn-56 and Asp-127 each coordinate K(+). (6S)-NADPHX-binding positions include 131 to 137 and Asp-160; that span reads GTGLNRT. Ser-163 lines the K(+) pocket.

This sequence belongs to the NnrE/AIBP family. Requires K(+) as cofactor.

The catalysed reaction is (6R)-NADHX = (6S)-NADHX. It carries out the reaction (6R)-NADPHX = (6S)-NADPHX. Its function is as follows. Catalyzes the epimerization of the S- and R-forms of NAD(P)HX, a damaged form of NAD(P)H that is a result of enzymatic or heat-dependent hydration. This is a prerequisite for the S-specific NAD(P)H-hydrate dehydratase to allow the repair of both epimers of NAD(P)HX. This Anaerococcus prevotii (strain ATCC 9321 / DSM 20548 / JCM 6508 / NCTC 11806 / PC1) (Peptostreptococcus prevotii) protein is NAD(P)H-hydrate epimerase.